Here is a 923-residue protein sequence, read N- to C-terminus: Protein translocase subunit SecA (923 aa).

ATP is bound by residues Gln86, 104–108 (GEGKT), and Asp512. Zn(2+) is bound by residues Cys906, Cys908, Cys917, and His918.

The protein belongs to the SecA family. In terms of assembly, monomer and homodimer. Part of the essential Sec protein translocation apparatus which comprises SecA, SecYEG and auxiliary proteins SecDF-YajC and YidC. Zn(2+) is required as a cofactor.

The protein resides in the cell inner membrane. The protein localises to the cytoplasm. It carries out the reaction ATP + H2O + cellular proteinSide 1 = ADP + phosphate + cellular proteinSide 2.. Its function is as follows. Part of the Sec protein translocase complex. Interacts with the SecYEG preprotein conducting channel. Has a central role in coupling the hydrolysis of ATP to the transfer of proteins into and across the cell membrane, serving both as a receptor for the preprotein-SecB complex and as an ATP-driven molecular motor driving the stepwise translocation of polypeptide chains across the membrane. This Caulobacter vibrioides (strain ATCC 19089 / CIP 103742 / CB 15) (Caulobacter crescentus) protein is Protein translocase subunit SecA.